The following is a 156-amino-acid chain: Small ribosomal subunit protein uS7 (156 aa).

It belongs to the universal ribosomal protein uS7 family. In terms of assembly, part of the 30S ribosomal subunit. Contacts proteins S9 and S11.

Its function is as follows. One of the primary rRNA binding proteins, it binds directly to 16S rRNA where it nucleates assembly of the head domain of the 30S subunit. Is located at the subunit interface close to the decoding center, probably blocks exit of the E-site tRNA. The polypeptide is Small ribosomal subunit protein uS7 (Bifidobacterium longum (strain NCC 2705)).